A 157-amino-acid polypeptide reads, in one-letter code: SsrA-binding protein (157 aa).

The interval 130–157 (KAEHDKRDTIKEREGKREVERVMKSRHR) is disordered.

Belongs to the SmpB family.

The protein resides in the cytoplasm. Required for rescue of stalled ribosomes mediated by trans-translation. Binds to transfer-messenger RNA (tmRNA), required for stable association of tmRNA with ribosomes. tmRNA and SmpB together mimic tRNA shape, replacing the anticodon stem-loop with SmpB. tmRNA is encoded by the ssrA gene; the 2 termini fold to resemble tRNA(Ala) and it encodes a 'tag peptide', a short internal open reading frame. During trans-translation Ala-aminoacylated tmRNA acts like a tRNA, entering the A-site of stalled ribosomes, displacing the stalled mRNA. The ribosome then switches to translate the ORF on the tmRNA; the nascent peptide is terminated with the 'tag peptide' encoded by the tmRNA and targeted for degradation. The ribosome is freed to recommence translation, which seems to be the essential function of trans-translation. This chain is SsrA-binding protein, found in Acidovorax sp. (strain JS42).